We begin with the raw amino-acid sequence, 361 residues long: Anhydro-N-acetylmuramic acid kinase (361 aa).

10–17 serves as a coordination point for ATP; the sequence is GTSLDGVD.

The protein belongs to the anhydro-N-acetylmuramic acid kinase family.

The enzyme catalyses 1,6-anhydro-N-acetyl-beta-muramate + ATP + H2O = N-acetyl-D-muramate 6-phosphate + ADP + H(+). Its pathway is amino-sugar metabolism; 1,6-anhydro-N-acetylmuramate degradation. The protein operates within cell wall biogenesis; peptidoglycan recycling. Catalyzes the specific phosphorylation of 1,6-anhydro-N-acetylmuramic acid (anhMurNAc) with the simultaneous cleavage of the 1,6-anhydro ring, generating MurNAc-6-P. Is required for the utilization of anhMurNAc either imported from the medium or derived from its own cell wall murein, and thus plays a role in cell wall recycling. The sequence is that of Anhydro-N-acetylmuramic acid kinase from Gluconobacter oxydans (strain 621H) (Gluconobacter suboxydans).